The sequence spans 1485 residues: Formin BNR1 (1485 aa).

Disordered regions lie at residues 65 to 88, 226 to 248, and 549 to 575; these read HLPP…PTLH, HDDS…PTET, and ANTS…SFDE. Residues 110-636 enclose the GBD/FH3 domain; sequence NQIPPEEIVD…HVTNESRVIG (527 aa). Residues 231–248 show a composition bias toward polar residues; it reads TSKLSIESGGSSGAPTET. A compositionally biased stretch (acidic residues) spans 553 to 564; it reads LEEDELTPELED. The stretch at 660–734 forms a coiled coil; that stretch reads ARRAVAESKM…EQLQSPNNTA (75 aa). The tract at residues 746 to 874 is disordered; that stretch reads GNGTVASLKD…GFMNASAPPP (129 aa). Residues 953-1368 enclose the FH2 domain; sequence VVPSIRPKNK…YEIRKKILED (416 aa). Coiled coils occupy residues 1240-1312 and 1351-1382; these read HNIS…GELN and QREE…ESAE. The interval 1447-1471 is disordered; it reads LKRRMTTRKRTTDGETSPKSEQFMS.

This sequence belongs to the formin homology family. BNI1 subfamily. As to quaternary structure, interacts with IQG1.

The protein localises to the bud neck. The protein resides in the cell septum. In terms of biological role, may organize microtubules by mediating spindle positioning and movement in the budding process. Required for cytokinesis and the maintenance of polarized hyphal growth. The protein is Formin BNR1 (BNR1) of Candida albicans (strain SC5314 / ATCC MYA-2876) (Yeast).